Here is a 346-residue protein sequence, read N- to C-terminus: Holliday junction branch migration complex subunit RuvB (346 aa).

The tract at residues Ser-4–Tyr-185 is large ATPase domain (RuvB-L). Residues Leu-24, Arg-25, Gly-66, Lys-69, Thr-70, Thr-71, Glu-132–Tyr-134, Arg-175, Tyr-185, and Arg-222 contribute to the ATP site. Position 70 (Thr-70) interacts with Mg(2+). Residues Thr-186–Asp-256 form a small ATPAse domain (RuvB-S) region. Positions Ala-259 to Asp-346 are head domain (RuvB-H). DNA-binding residues include Arg-295, Arg-314, and Arg-319.

It belongs to the RuvB family. Homohexamer. Forms an RuvA(8)-RuvB(12)-Holliday junction (HJ) complex. HJ DNA is sandwiched between 2 RuvA tetramers; dsDNA enters through RuvA and exits via RuvB. An RuvB hexamer assembles on each DNA strand where it exits the tetramer. Each RuvB hexamer is contacted by two RuvA subunits (via domain III) on 2 adjacent RuvB subunits; this complex drives branch migration. In the full resolvosome a probable DNA-RuvA(4)-RuvB(12)-RuvC(2) complex forms which resolves the HJ.

Its subcellular location is the cytoplasm. The enzyme catalyses ATP + H2O = ADP + phosphate + H(+). Functionally, the RuvA-RuvB-RuvC complex processes Holliday junction (HJ) DNA during genetic recombination and DNA repair, while the RuvA-RuvB complex plays an important role in the rescue of blocked DNA replication forks via replication fork reversal (RFR). RuvA specifically binds to HJ cruciform DNA, conferring on it an open structure. The RuvB hexamer acts as an ATP-dependent pump, pulling dsDNA into and through the RuvAB complex. RuvB forms 2 homohexamers on either side of HJ DNA bound by 1 or 2 RuvA tetramers; 4 subunits per hexamer contact DNA at a time. Coordinated motions by a converter formed by DNA-disengaged RuvB subunits stimulates ATP hydrolysis and nucleotide exchange. Immobilization of the converter enables RuvB to convert the ATP-contained energy into a lever motion, pulling 2 nucleotides of DNA out of the RuvA tetramer per ATP hydrolyzed, thus driving DNA branch migration. The RuvB motors rotate together with the DNA substrate, which together with the progressing nucleotide cycle form the mechanistic basis for DNA recombination by continuous HJ branch migration. Branch migration allows RuvC to scan DNA until it finds its consensus sequence, where it cleaves and resolves cruciform DNA. The sequence is that of Holliday junction branch migration complex subunit RuvB from Nitrosomonas europaea (strain ATCC 19718 / CIP 103999 / KCTC 2705 / NBRC 14298).